Consider the following 429-residue polypeptide: Serine--tRNA ligase (429 aa).

Residue 236–238 (TGE) coordinates L-serine. 267–269 (RSE) contributes to the ATP binding site. Glu-290 contacts L-serine. Position 354–357 (354–357 (EISS)) interacts with ATP. L-serine is bound at residue Ser-390.

Belongs to the class-II aminoacyl-tRNA synthetase family. Type-1 seryl-tRNA synthetase subfamily. In terms of assembly, homodimer. The tRNA molecule binds across the dimer.

The protein localises to the cytoplasm. It carries out the reaction tRNA(Ser) + L-serine + ATP = L-seryl-tRNA(Ser) + AMP + diphosphate + H(+). The catalysed reaction is tRNA(Sec) + L-serine + ATP = L-seryl-tRNA(Sec) + AMP + diphosphate + H(+). It participates in aminoacyl-tRNA biosynthesis; selenocysteinyl-tRNA(Sec) biosynthesis; L-seryl-tRNA(Sec) from L-serine and tRNA(Sec): step 1/1. Functionally, catalyzes the attachment of serine to tRNA(Ser). Is also able to aminoacylate tRNA(Sec) with serine, to form the misacylated tRNA L-seryl-tRNA(Sec), which will be further converted into selenocysteinyl-tRNA(Sec). In Vesicomyosocius okutanii subsp. Calyptogena okutanii (strain HA), this protein is Serine--tRNA ligase.